Reading from the N-terminus, the 251-residue chain is tRNA (guanine-N(7)-)-methyltransferase (251 aa).

The segment at 1 to 43 (MQPNEQPGTGPADTTLEQQDTAAAEVGHPRRIRSFVRRAGRTS) is disordered. The segment covering 29-40 (PRRIRSFVRRAG) has biased composition (basic residues). Residues Glu82, Glu107, Asp134, and Asp157 each coordinate S-adenosyl-L-methionine. Asp157 is an active-site residue. Lys161 lines the substrate pocket. Residues 163-168 (RHNKRR) form an interaction with RNA region. Substrate is bound by residues Asp193 and 228–231 (TKFE).

The protein belongs to the class I-like SAM-binding methyltransferase superfamily. TrmB family.

The catalysed reaction is guanosine(46) in tRNA + S-adenosyl-L-methionine = N(7)-methylguanosine(46) in tRNA + S-adenosyl-L-homocysteine. The protein operates within tRNA modification; N(7)-methylguanine-tRNA biosynthesis. Its function is as follows. Catalyzes the formation of N(7)-methylguanine at position 46 (m7G46) in tRNA. The chain is tRNA (guanine-N(7)-)-methyltransferase from Ralstonia nicotianae (strain ATCC BAA-1114 / GMI1000) (Ralstonia solanacearum).